Here is a 218-residue protein sequence, read N- to C-terminus: Glutathione S-transferase Mu 7 (218 aa).

The 87-residue stretch at 2 to 88 (PMTLGYWDIR…YLGRKHNLCG (87 aa)) folds into the GST N-terminal domain. Residues 7-8 (YW), 46-50 (WLNEK), 59-60 (NL), and 72-73 (QS) contribute to the glutathione site. Residues 90 to 208 (TEEERIRVDI…KSSRFLPRPL (119 aa)) form the GST C-terminal domain. Tyr-116 contacts substrate.

It belongs to the GST superfamily. Mu family. Homodimer.

It is found in the cytoplasm. The enzyme catalyses RX + glutathione = an S-substituted glutathione + a halide anion + H(+). Functionally, conjugation of reduced glutathione to a wide number of exogenous and endogenous hydrophobic electrophiles. The sequence is that of Glutathione S-transferase Mu 7 from Rattus norvegicus (Rat).